A 179-amino-acid polypeptide reads, in one-letter code: Ubiquitin-conjugating enzyme E2 2 (179 aa).

Positions 1 to 28 are disordered; the sequence is MSTPARRRLMRDFKRMQQDPPSGVSASP. The 147-residue stretch at 4 to 150 folds into the UBC core domain; sequence PARRRLMRDF…VRETVENSWN (147 aa). Cysteine 88 serves as the catalytic Glycyl thioester intermediate. The disordered stretch occupies residues 145–179; that stretch reads VENSWNDDDDEEEEEEDEDEAEDEDDDDDDNIDED. The span at 149-179 shows a compositional bias: acidic residues; the sequence is WNDDDDEEEEEEDEDEAEDEDDDDDDNIDED. Residues 151 to 179 form an acidic tail region; that stretch reads DDDDEEEEEEDEDEAEDEDDDDDDNIDED.

The protein belongs to the ubiquitin-conjugating enzyme family.

The protein localises to the cytoplasm. It localises to the nucleus. The enzyme catalyses S-ubiquitinyl-[E1 ubiquitin-activating enzyme]-L-cysteine + [E2 ubiquitin-conjugating enzyme]-L-cysteine = [E1 ubiquitin-activating enzyme]-L-cysteine + S-ubiquitinyl-[E2 ubiquitin-conjugating enzyme]-L-cysteine.. Its pathway is protein modification; protein ubiquitination. In terms of biological role, catalyzes the covalent attachment of ubiquitin to other proteins. Plays a role in transcription regulation by catalyzing the monoubiquitination of histone H2B to form H2BK123ub1. H2BK123ub1 gives a specific tag for epigenetic transcriptional activation and is also a prerequisite for H3K4me and H3K79me formation. Also involved in postreplication repair of UV-damaged DNA, in N-end rule-dependent protein degradation and in sporulation. This chain is Ubiquitin-conjugating enzyme E2 2 (UBC2), found in Candida albicans (strain SC5314 / ATCC MYA-2876) (Yeast).